Here is a 563-residue protein sequence, read N- to C-terminus: Lengsin (563 aa).

The interval 1–115 (MTDEGDLAQE…PNTDPTRYNA (115 aa)) is disordered. Residues 26-37 (SKLRRARRKVTK) are compositionally biased toward basic residues. Polar residues-rich tracts occupy residues 51-62 (ANSSEMSRNQIA) and 105-115 (SPNTDPTRYNA). The GS beta-grasp domain maps to 137-231 (NHLQFVRFEA…VICDTFTVTG (95 aa)). In terms of domain architecture, GS catalytic spans 238–563 (PRYIAKRQLR…EGNKFLEYFI (326 aa)).

Belongs to the glutamine synthetase family. As to quaternary structure, dodecamer. Interacts with BFSP2 and VIM. As to expression, expressed in lens.

In terms of biological role, may act as a component of the cytoskeleton or as a chaperone for the reorganization of intermediate filament proteins during terminal differentiation in the lens. Does not seem to have enzymatic activity. The chain is Lengsin (Lgsn) from Mus musculus (Mouse).